Consider the following 147-residue polypeptide: Cyanate hydratase (147 aa).

Catalysis depends on residues Arg-88, Glu-91, and Ser-114.

Belongs to the cyanase family.

It catalyses the reaction cyanate + hydrogencarbonate + 3 H(+) = NH4(+) + 2 CO2. Its function is as follows. Catalyzes the reaction of cyanate with bicarbonate to produce ammonia and carbon dioxide. The chain is Cyanate hydratase from Prochlorococcus marinus (strain NATL2A).